We begin with the raw amino-acid sequence, 442 residues long: Tubulin beta chain (442 aa).

Residues Gln11, Glu69, Ser138, Gly142, Thr143, Gly144, Asn204, and Asn226 each contribute to the GTP site. Glu69 contacts Mg(2+).

The protein belongs to the tubulin family. As to quaternary structure, dimer of alpha and beta chains. A typical microtubule is a hollow water-filled tube with an outer diameter of 25 nm and an inner diameter of 15 nM. Alpha-beta heterodimers associate head-to-tail to form protofilaments running lengthwise along the microtubule wall with the beta-tubulin subunit facing the microtubule plus end conferring a structural polarity. Microtubules usually have 13 protofilaments but different protofilament numbers can be found in some organisms and specialized cells. Requires Mg(2+) as cofactor.

It is found in the cytoplasm. The protein localises to the cytoskeleton. Tubulin is the major constituent of microtubules, a cylinder consisting of laterally associated linear protofilaments composed of alpha- and beta-tubulin heterodimers. Microtubules grow by the addition of GTP-tubulin dimers to the microtubule end, where a stabilizing cap forms. Below the cap, tubulin dimers are in GDP-bound state, owing to GTPase activity of alpha-tubulin. The polypeptide is Tubulin beta chain (bPT2) (Paramecium tetraurelia).